Reading from the N-terminus, the 182-residue chain is Protein canopy homolog 2 (182 aa).

A signal peptide spans 1 to 20; the sequence is MKGWGWLALLLGVLLGTAWA. A Saposin B-type domain is found at 24–175; it reads QDLHCGACRA…KRTDLCDHAL (152 aa). Cystine bridges form between Cys28-Cys171, Cys31-Cys164, and Cys86-Cys137. Ser115 is modified (phosphoserine). A Prevents secretion from ER motif is present at residues 179–182; sequence HDEL.

It belongs to the canopy family. As to quaternary structure, interacts with MYLIP/MIR.

It is found in the endoplasmic reticulum. Its function is as follows. Positive regulator of neurite outgrowth by stabilizing myosin regulatory light chain (MRLC). It prevents MIR-mediated MRLC ubiquitination and its subsequent proteasomal degradation. The polypeptide is Protein canopy homolog 2 (Cnpy2) (Mus musculus (Mouse)).